The chain runs to 412 residues: Decapping nuclease RAI1 (412 aa).

Glutamate 196 provides a ligand contact to a divalent metal cation. Cysteine 228 and glutamate 245 together coordinate substrate. Positions 247, 265, and 266 each coordinate a divalent metal cation. Lysine 267 and glutamine 291 together coordinate substrate.

It belongs to the DXO/Dom3Z family. Interacts with exr-1/rat1; the interaction is direct, stabilizes exr-1 protein structure and stimulates its exoribonuclease activity. The interaction also stimulates rai1 pyrophosphohydrolase activity, probably by recruiting it to mRNA substrates. The cofactor is a divalent metal cation.

It localises to the nucleus. The enzyme catalyses a 5'-end NAD(+)-phospho-ribonucleoside in mRNA + H2O = a 5'-end phospho-ribonucleoside in mRNA + NAD(+) + H(+). The catalysed reaction is a 5'-end (N(7)-methyl 5'-triphosphoguanosine)-ribonucleoside-ribonucleotide in mRNA + H2O = a (N(7)-methyl 5'-triphosphoguanosine)-nucleoside + a 5'-end phospho-ribonucleoside in mRNA + H(+). It catalyses the reaction a 5'-end triphospho-ribonucleoside in mRNA + H2O = a 5'-end phospho-ribonucleoside in mRNA + diphosphate + H(+). In terms of biological role, decapping enzyme for NAD-capped RNAs: specifically hydrolyzes the nicotinamide adenine dinucleotide (NAD) cap from a subset of RNAs by removing the entire NAD moiety from the 5'-end of an NAD-capped RNA. The NAD-cap is present at the 5'-end of some RNAs and snoRNAs. In contrast to the canonical 5'-end N7 methylguanosine (m7G) cap, the NAD cap promotes mRNA decay. Also acts as a non-canonical decapping enzyme that removes the entire cap structure of m7G capped or incompletely capped RNAs. Has decapping activity toward incomplete 5'-end m7G cap mRNAs such as unmethylated 5'-end-capped RNA (cap0), while it has no activity toward 2'-O-ribose methylated m7G cap (cap1). Also possesses RNA 5'-pyrophosphohydrolase activity by hydrolyzing the 5'-end triphosphate to release pyrophosphates. Stimulates exoribonuclease activity of Rat1, allowing it to degrade RNAs with stable secondary structure more effectively. This is Decapping nuclease RAI1 (rai1) from Neurospora crassa (strain ATCC 24698 / 74-OR23-1A / CBS 708.71 / DSM 1257 / FGSC 987).